The primary structure comprises 468 residues: Chromatin assembly factor 1 subunit B (468 aa).

5 WD repeats span residues 11-52 (HDSQ…NGQN), 69-108 (HHEQ…TQQE), 143-182 (TAAA…LVCG), 185-224 (DHGH…AGVV), and 371-413 (IHYS…SRIE).

The protein belongs to the WD repeat HIR1 family. As to quaternary structure, component of chromatin assembly factor 1 (CAF-1), composed of MSI1/p50, CAC2/p60 and CAC1/p90. Interacts with RTT106.

The protein localises to the nucleus. Functionally, acts as a component of the histone chaperone complex chromatin assembly factor 1 (CAF-1), which assembles histone octamers onto replicating DNA. It performs the first step of the nucleosome assembly process, bringing newly synthesized histones H3 and H4 to replicating DNA; histones H2A/H2B can bind to this chromatin precursor subsequent to DNA replication to complete the histone octamer. Plays a role in the maintenance of heterochromatin. This Saccharomyces cerevisiae (strain ATCC 204508 / S288c) (Baker's yeast) protein is Chromatin assembly factor 1 subunit B (CAC2).